A 729-amino-acid polypeptide reads, in one-letter code: MARPIQITIMGDADQLSETLDQASEEVSAFGEQAKGLALAAGGAIAVGIGAGIAEALEREAGNDVLAAQLGATPAEAKRLGEAAGEVYSAGYGESVADANEALKGLWQQGLVPAGATADDNGEHFEKAMDVATVLGDEVGPTSNAVGQMLKTGMAKNADEAFDILVRGAQEGANKSEDLLDTFNEYGVQFKGIGLDGKTAMGLLSQGLQGGARDADLVADSLKEFGLIVRAGGDEVNAAYKSMGLNGAEMTKAIAQGGPVAKDALDKTLDGLRKIKDPAERIATAVTLFGTQAEDMQDALLKLDPSSAVETLGKVDGAAKSAGETMHDNAATKIKAFTRGLQTGLVDFIGGTVLPILEKFKPALEGIGSTMATVGGFVSEHSTTFKVVAGIITAVLLPALIQWGVQSTINAGKAVVAWVTSSATAVIESTKQALAHAKVVAGWIASGVQAGLNAAKVVAGWVLMGAQSMIQGARMAAAWLLAMGPIPLIIAAIVGLVVLIVANWDKIWAYTKKVFQWLWDWVKKIFNWLEDLFLNFTGPGLLIKHWDKSRSATKNTFNNVKNFAKDALNAVVNFVKGLPGRILSAASSLLSAGKRIGGYVIDGIKNGLSKLGGFASSLASAVGRAAKGAINGVIDLLNWATPNKLGWGKLSIDLPDNPIPKIRAMGGPASGWTRVGERGPEDVFLPNGSTVRPNHALSGSGGVTVNVQTNADPFAIGREVAWALRTSPA.

Residues 9–35 (IMGDADQLSETLDQASEEVSAFGEQAK) adopt a coiled-coil conformation.

Belongs to the P2likevirus tape measure protein family.

In terms of biological role, serves as a base for tail tube protein polymerization and acts as a template for tail length determination. This Streptomyces phage phiC31 (Bacteriophage phi-C31) protein is Probable tape measure protein.